The sequence spans 553 residues: Undecaprenyl phosphate-alpha-4-amino-4-deoxy-L-arabinose arabinosyl transferase (553 aa).

12 consecutive transmembrane segments (helical) span residues 8–28 (LVLLLGFTLLYLLPLEFRALW), 83–103 (VRFGAVFSTTLSALMVAWLAF), 111–131 (VAVLSGVIFLTCLLVYGVGTY), 132–152 (AVLDPMITLWLVAAMCSFWLG), 176–196 (VMTKGFLALAVPVLGVLPWVI), 204–224 (VLLFGPLAIISATLITLPWAL), 255–275 (APFWYYIPFLIAGCLPWVALL), 288–308 (IESGTLYLLGWVVMPLLFFSI), 317–337 (ILPCFAPLAILLARHATQLVA), 350–370 (TVFGAVCALIVLLVLAPWGIA), 380–400 (VLKVIQASIAFLVWALVGYLT), and 407–427 (LWQWAALCPLGIALLVGGMIP).

The protein belongs to the glycosyltransferase 83 family.

The protein resides in the cell inner membrane. It carries out the reaction 4-amino-4-deoxy-alpha-L-arabinopyranosyl di-trans,octa-cis-undecaprenyl phosphate + lipid IVA = lipid IIA + di-trans,octa-cis-undecaprenyl phosphate.. The protein operates within lipopolysaccharide metabolism; 4-amino-4-deoxy-beta-L-arabinose-lipid A biosynthesis. In terms of biological role, catalyzes the transfer of the L-Ara4N moiety of the glycolipid undecaprenyl phosphate-alpha-L-Ara4N to lipid A. The modified arabinose is attached to lipid A and is required for resistance to polymyxin and cationic antimicrobial peptides. This chain is Undecaprenyl phosphate-alpha-4-amino-4-deoxy-L-arabinose arabinosyl transferase, found in Enterobacter sp. (strain 638).